A 285-amino-acid chain; its full sequence is Urease accessory protein UreD (285 aa).

Belongs to the UreD family. As to quaternary structure, ureD, UreF and UreG form a complex that acts as a GTP-hydrolysis-dependent molecular chaperone, activating the urease apoprotein by helping to assemble the nickel containing metallocenter of UreC. The UreE protein probably delivers the nickel.

It is found in the cytoplasm. Its function is as follows. Required for maturation of urease via the functional incorporation of the urease nickel metallocenter. The chain is Urease accessory protein UreD from Picosynechococcus sp. (strain ATCC 27264 / PCC 7002 / PR-6) (Agmenellum quadruplicatum).